Consider the following 403-residue polypeptide: Poly(rC)-binding protein 4 (403 aa).

KH domains lie at 17–67 (TLTL…TITG), 101–154 (PVTL…TVSG), and 241–293 (TSSQ…TITG).

It localises to the cytoplasm. In terms of biological role, single-stranded nucleic acid binding protein that binds preferentially to oligo dC. The protein is Poly(rC)-binding protein 4 (PCBP4) of Bos taurus (Bovine).